The following is a 124-amino-acid chain: Small ribosomal subunit protein uS12 (124 aa).

Position 89 is a 3-methylthioaspartic acid (Asp-89). The segment at Thr-104–Glu-124 is disordered.

The protein belongs to the universal ribosomal protein uS12 family. As to quaternary structure, part of the 30S ribosomal subunit. Contacts proteins S8 and S17. May interact with IF1 in the 30S initiation complex.

Functionally, with S4 and S5 plays an important role in translational accuracy. In terms of biological role, interacts with and stabilizes bases of the 16S rRNA that are involved in tRNA selection in the A site and with the mRNA backbone. Located at the interface of the 30S and 50S subunits, it traverses the body of the 30S subunit contacting proteins on the other side and probably holding the rRNA structure together. The combined cluster of proteins S8, S12 and S17 appears to hold together the shoulder and platform of the 30S subunit. The chain is Small ribosomal subunit protein uS12 from Parasynechococcus marenigrum (strain WH8102).